Reading from the N-terminus, the 1108-residue chain is MRILLLLLQNILVFCQFLQTIKVGLMFSKDTASVIRSVGYRTSAAAVLVAKDRIRAEHLLDQYDFNFTIKFDECSESLAAGKVVELLTHDNVDVIIGPTCNRAGVAVASLADFYNVPVFQWGLTTTADIGNFSRYQTTVTLSLDTHSISLAVREILRQYGWSEFVFIYSNDGDEEKCAAMKDDMEKMGIENSDVTMAYMIQIQTVTMESLQRTLLEVSKRGRIIIACFASGRGFKKAFIASTVLAGMSTEEYLYVFAEPQSRGFYVDEADGKVHYSWDDTDGQLVTGLTNEQIRDAYGKVLYICDNMGEPTTITTQYTNFTSQVISRMAEQPFNCVQDCSNQSYKHAATYAGQLADSFYAYAFALNKSLTQDPTRSNLKNGSFVLSNIGMTFQGVGGEAVTLDESGSRIVQVYMFAMNSSLLPYMAASLLVNVSEVVFTPFYKSESELWSVRPLSRPKCGFTGLECPADFVKEYLVYTIIAAFIVILALLAGCAGLLYTMHMKRKEMERQDLLWQVAFVELQQVQSKSRAEASMHSFASGPSTSTKMTVESRTETTNFIFYHYHQEVVAAKKHDLLVLFDANQKSEFRQMRNFDNDNLNKFIGLCLDGPQLLSLWRFCSRGSLSDVISKSSMQMDSFFMFSLIRDISNGLYFIHSSFLKCHGQLTSRCCLIDDRWQIKISGFGLKSVRTFENPKKEDLLWASPEYLRNEDQERLPEGDIYSFGIICAEILTRSSAFDLENRKEKPDVIIYQVKKGGHNPTRPSLDTGETVVINPALLHLVRDCWTERPSERPSIEQVRSHLNGMKDGRKTNLMDHVFNMLETYASTLEEEVSDRTKELTEEKKKSDVLLYRMLPRMVADKLKLGQTVEPETFEQVTIFFSDVVQFTTLAGKCTPLQVVTLLNDLYTIFDGIIEQNDVYKVETIGDGYLCVSGLPHRNGNDHIRHIARMSLGFLSSLEFFRVQHLPAERINLRIGINCGSVVAGVVGLTMPRYCLFGDAVNTASRMESNGKPGQIHVTAEANRMLTQVVGGFRTESRGEVIIKGKGVMETFWLLGEESGYTAPSKAAPKVIQHRQSIRSISPILEKNAEGSETSSLSVDQAGDNNSETV.

An N-terminal signal peptide occupies residues 1 to 15; that stretch reads MRILLLLLQNILVFC. At 16–474 the chain is on the extracellular side; sequence QFLQTIKVGL…ECPADFVKEY (459 aa). 6 N-linked (GlcNAc...) asparagine glycosylation sites follow: N66, N131, N319, N341, N366, and N380. The helical transmembrane segment at 475-495 threads the bilayer; that stretch reads LVYTIIAAFIVILALLAGCAG. The Protein kinase domain maps to 483 to 803; that stretch reads FIVILALLAG…IEQVRSHLNG (321 aa). Residues 489–497 and K571 each bind ATP; that span reads LLAGCAGLL. Over 496–1108 the chain is Cytoplasmic; the sequence is LLYTMHMKRK…QAGDNNSETV (613 aa). A Guanylate cyclase domain is found at 876 to 1006; that stretch reads TIFFSDVVQF…DAVNTASRME (131 aa). The interval 1083-1108 is disordered; sequence LEKNAEGSETSSLSVDQAGDNNSETV. Residues 1089–1108 show a composition bias toward polar residues; sequence GSETSSLSVDQAGDNNSETV.

This sequence belongs to the adenylyl cyclase class-4/guanylyl cyclase family. As to expression, expressed asymmetrically in ASE left (ASEL) sensory neuron. Expressed in excretory gland and canal cell.

The protein resides in the cell membrane. The catalysed reaction is GTP = 3',5'-cyclic GMP + diphosphate. Guanylate cyclase involved in the production of the second messenger cGMP. The chain is Receptor-type guanylate cyclase gcy-20 from Caenorhabditis elegans.